The sequence spans 138 residues: Beta-galactosidase (138 aa).

Belongs to the glycosyl hydrolase 2 family.

The enzyme catalyses Hydrolysis of terminal non-reducing beta-D-galactose residues in beta-D-galactosides.. In Rhizobium radiobacter (Agrobacterium tumefaciens), this protein is Beta-galactosidase (lacZ).